A 471-amino-acid polypeptide reads, in one-letter code: RuvB-like protein 2 (471 aa).

75 to 82 contributes to the ATP binding site; sequence GPPSTGKT.

This sequence belongs to the RuvB family. Probably forms a homohexamer. Interacts with RVB1 and may form heterododecamers with RVB1. Component of the SWR1 chromatin remodeling complex composed of at least ACT1, ARP4, RVB1, RVB2, ARP6, YAF9, VPS71, VPS72, SWC3, SWC4, SWC5, SWC7 and SWR1, and perhaps BDF1. Component of the chromatin-remodeling INO80 complex, at least composed of ARP4, ARP5, ARP8, RVB1, RVB2, TAF14, NHP10, IES1, IES3, IES4, IES6, ACT1, IES2, IES5 and INO80. Also belongs to the R2TP complex composed of at least RVB1, RVB2, TAH1 and PIH1. Interacts with SPT15/TBP.

It is found in the nucleus. Its subcellular location is the nucleoplasm. It carries out the reaction ATP + H2O = ADP + phosphate + H(+). In terms of biological role, DNA helicase which participates in several chromatin remodeling complexes, including the SWR1 and the INO80 complexes. The SWR1 complex mediates the ATP-dependent exchange of histone H2A for the H2A variant HZT1 leading to transcriptional regulation of selected genes by chromatin remodeling. The INO80 complex remodels chromatin by shifting nucleosomes. Its ability to induce transcription of some phosphate-responsive genes is modulated by inositol polyphosphates. The INO80 complex is involved in DNA repair by associating to 'Ser-129' phosphorylated H2A histones as a response to DNA damage. During transcription may recruit SPT15/TBP to the TATA-boxes of involved genes. Required for box C/D and box H/ACA snoRNA accumulation and involved in pre-rRNA processing. This is RuvB-like protein 2 (RVB2) from Saccharomyces cerevisiae (strain ATCC 204508 / S288c) (Baker's yeast).